Reading from the N-terminus, the 73-residue chain is DNA-binding protein S1FA3 (73 aa).

The short motif at 47-52 (PPRKKK) is the Nuclear localization signal element. A compositionally biased stretch (basic residues) spans 47-63 (PPRKKKPVSKKKMKKEK). Positions 47-73 (PPRKKKPVSKKKMKKEKMKQGVQVPGE) are disordered.

Belongs to the S1FA transcription factor family.

The protein resides in the nucleus. Functionally, DNA-binding protein that specifically recognizes a negative element (S1F) within the RPS1 promoter. The sequence is that of DNA-binding protein S1FA3 (S1FA3) from Arabidopsis thaliana (Mouse-ear cress).